The following is a 1088-amino-acid chain: RNA-directed RNA polymerase (1088 aa).

The region spanning 501–687 (LSYGDVTRFL…AKRYIAGGKI (187 aa)) is the RdRp catalytic domain.

The protein belongs to the reoviridae RNA-directed RNA polymerase family. In terms of assembly, interacts with VP3 (Potential). Interacts with VP2; this interaction activates VP1. Interacts with NSP5; this interaction is probably necessary for the formation of functional virus factories. Interacts with NSP2; this interaction is weak. It depends on Mg(2+) as a cofactor.

The protein localises to the virion. It carries out the reaction RNA(n) + a ribonucleoside 5'-triphosphate = RNA(n+1) + diphosphate. Its function is as follows. RNA-directed RNA polymerase that is involved in both transcription and genome replication. Together with VP3 capping enzyme, forms an enzyme complex positioned near the channels situated at each of the five-fold vertices of the core. Following infection, the outermost layer of the virus is lost, leaving a double-layered particle (DLP) made up of the core and VP6 shell. VP1 then catalyzes the transcription of fully conservative plus-strand genomic RNAs that are extruded through the DLP's channels into the cytoplasm where they function as mRNAs for translation of viral proteins. One copy of each of the viral (+)RNAs is also recruited during core assembly, together with newly synthesized polymerase complexes and VP2. The polymerase of these novo-formed particles catalyzes the synthesis of complementary minus-strands leading to dsRNA formation. To do so, the polymerase specifically recognizes and binds 4 bases 5'-UGUG-3' in the conserved 3'-sequence of plus-strand RNA templates. VP2 presumably activates the autoinhibited VP1-RNA complex to coordinate packaging and genome replication. Once dsRNA synthesis is complete, the polymerase switches to the transcriptional mode, thus providing secondary transcription. The protein is RNA-directed RNA polymerase of Rotavirus A (strain RVA/SA11-Both/G3P5B[2]) (RV-A).